The primary structure comprises 193 residues: ATP synthase subunit b 2 (193 aa).

The helical transmembrane segment at 44 to 64 threads the bilayer; that stretch reads IFWLVLTLLAIYFVLTKIALP.

The protein belongs to the ATPase B chain family. F-type ATPases have 2 components, F(1) - the catalytic core - and F(0) - the membrane proton channel. F(1) has five subunits: alpha(3), beta(3), gamma(1), delta(1), epsilon(1). F(0) has three main subunits: a(1), b(2) and c(10-14). The alpha and beta chains form an alternating ring which encloses part of the gamma chain. F(1) is attached to F(0) by a central stalk formed by the gamma and epsilon chains, while a peripheral stalk is formed by the delta and b chains.

It is found in the cell inner membrane. In terms of biological role, f(1)F(0) ATP synthase produces ATP from ADP in the presence of a proton or sodium gradient. F-type ATPases consist of two structural domains, F(1) containing the extramembraneous catalytic core and F(0) containing the membrane proton channel, linked together by a central stalk and a peripheral stalk. During catalysis, ATP synthesis in the catalytic domain of F(1) is coupled via a rotary mechanism of the central stalk subunits to proton translocation. Its function is as follows. Component of the F(0) channel, it forms part of the peripheral stalk, linking F(1) to F(0). The b'-subunit is a diverged and duplicated form of b found in plants and photosynthetic bacteria. This is ATP synthase subunit b 2 (atpF2) from Jannaschia sp. (strain CCS1).